The sequence spans 174 residues: Large ribosomal subunit protein uL10 (174 aa).

The protein belongs to the universal ribosomal protein uL10 family. As to quaternary structure, part of the ribosomal stalk of the 50S ribosomal subunit. The N-terminus interacts with L11 and the large rRNA to form the base of the stalk. The C-terminus forms an elongated spine to which L12 dimers bind in a sequential fashion forming a multimeric L10(L12)X complex.

Its function is as follows. Forms part of the ribosomal stalk, playing a central role in the interaction of the ribosome with GTP-bound translation factors. The chain is Large ribosomal subunit protein uL10 from Geobacter metallireducens (strain ATCC 53774 / DSM 7210 / GS-15).